The sequence spans 309 residues: 4-hydroxy-3-methylbut-2-enyl diphosphate reductase (309 aa).

A [4Fe-4S] cluster-binding site is contributed by Cys-12. (2E)-4-hydroxy-3-methylbut-2-enyl diphosphate is bound by residues His-43 and His-77. Dimethylallyl diphosphate-binding residues include His-43 and His-77. Residues His-43 and His-77 each contribute to the isopentenyl diphosphate site. A [4Fe-4S] cluster-binding site is contributed by Cys-99. His-127 serves as a coordination point for (2E)-4-hydroxy-3-methylbut-2-enyl diphosphate. His-127 is a binding site for dimethylallyl diphosphate. His-127 contacts isopentenyl diphosphate. Glu-129 acts as the Proton donor in catalysis. (2E)-4-hydroxy-3-methylbut-2-enyl diphosphate is bound at residue Thr-167. A [4Fe-4S] cluster-binding site is contributed by Cys-197. Residues Ser-225, Ser-226, Asn-227, and Ser-269 each contribute to the (2E)-4-hydroxy-3-methylbut-2-enyl diphosphate site. Positions 225, 226, 227, and 269 each coordinate dimethylallyl diphosphate. Residues Ser-225, Ser-226, Asn-227, and Ser-269 each coordinate isopentenyl diphosphate.

The protein belongs to the IspH family. The cofactor is [4Fe-4S] cluster.

The catalysed reaction is isopentenyl diphosphate + 2 oxidized [2Fe-2S]-[ferredoxin] + H2O = (2E)-4-hydroxy-3-methylbut-2-enyl diphosphate + 2 reduced [2Fe-2S]-[ferredoxin] + 2 H(+). It carries out the reaction dimethylallyl diphosphate + 2 oxidized [2Fe-2S]-[ferredoxin] + H2O = (2E)-4-hydroxy-3-methylbut-2-enyl diphosphate + 2 reduced [2Fe-2S]-[ferredoxin] + 2 H(+). Its pathway is isoprenoid biosynthesis; dimethylallyl diphosphate biosynthesis; dimethylallyl diphosphate from (2E)-4-hydroxy-3-methylbutenyl diphosphate: step 1/1. It functions in the pathway isoprenoid biosynthesis; isopentenyl diphosphate biosynthesis via DXP pathway; isopentenyl diphosphate from 1-deoxy-D-xylulose 5-phosphate: step 6/6. Its function is as follows. Catalyzes the conversion of 1-hydroxy-2-methyl-2-(E)-butenyl 4-diphosphate (HMBPP) into a mixture of isopentenyl diphosphate (IPP) and dimethylallyl diphosphate (DMAPP). Acts in the terminal step of the DOXP/MEP pathway for isoprenoid precursor biosynthesis. The polypeptide is 4-hydroxy-3-methylbut-2-enyl diphosphate reductase (Wolbachia sp. subsp. Brugia malayi (strain TRS)).